The primary structure comprises 312 residues: MKITILSGGTGTPKLIQGFKKIIPNKDISVIVNTGEDTYIGDLYLSPDIDTVIYTFSDIINDETWYGLKEDTFFCHEQLKNYGFNEVLKIGDRDRALKMHKTALLKKGIPLSEIVELEKSSLNITSKIYPMSNDLVQSKILIEENGEKLLLKFHDFWIFRKGNANVLDVFYENSNYAKPADGVLRAIEESDFVVIGPSNPITSIGPILSIKEIKEALKEKIVFAVSPIIGENPVSGPTGTLMSAKGYSVDVTGIYGYYKDIVNVMVIDSKDINKKKEIECDVLCIDTIMKTIEDKVNLSKNIVEYYKSKCTY.

2 residues coordinate 7,8-didemethyl-8-hydroxy-5-deazariboflavin: aspartate 50 and lysine 89.

The protein belongs to the CofD family. As to quaternary structure, homodimer. Mg(2+) is required as a cofactor.

It carries out the reaction (2S)-lactyl-2-diphospho-5'-guanosine + 7,8-didemethyl-8-hydroxy-5-deazariboflavin = oxidized coenzyme F420-0 + GMP + H(+). It participates in cofactor biosynthesis; coenzyme F420 biosynthesis. In terms of biological role, catalyzes the transfer of the 2-phospholactate moiety from (2S)-lactyl-2-diphospho-5'-guanosine to 7,8-didemethyl-8-hydroxy-5-deazariboflavin (FO) with the formation of oxidized coenzyme F420-0 and GMP. The chain is 2-phospho-L-lactate transferase from Methanococcus vannielii (strain ATCC 35089 / DSM 1224 / JCM 13029 / OCM 148 / SB).